A 994-amino-acid chain; its full sequence is Cation-chloride cotransporter 2 (994 aa).

The interval 1–28 (MERGGFGGAGRHDEEAPAMRPAPQQRYR) is disordered. Residues 1 to 139 (MERGGFGGAG…GHPKETETKL (139 aa)) are Cytoplasmic-facing. A helical transmembrane segment spans residues 140–160 (DTMMGVFVPCLQNILGIIYYI). Residues 161 to 174 (RFTWIVGMGGVWQS) lie on the Extracellular side of the membrane. A helical transmembrane segment spans residues 175–195 (LVLVAFCGSCTFLTTISLSAI). The Cytoplasmic portion of the chain corresponds to 196–221 (ATNGAMKGGGPYYLIGRALGPEVGVS). The chain crosses the membrane as a helical span at residues 222–242 (IGLCFFLGNAVAGAMYVLGAV). At 243-287 (ETFLDAVPSAEFFQESVTVVTNTFVNGTAAGNATTISTPNLHDLQ) the chain is on the extracellular side. N268 and N274 each carry an N-linked (GlcNAc...) asparagine glycan. A helical transmembrane segment spans residues 288–308 (VYGIIVTILLCFIVFGGVKII). The Cytoplasmic portion of the chain corresponds to 309–311 (NKV). Residues 312–332 (APAFLIPVLFSILCIYIGVFI) form a helical membrane-spanning segment. The Extracellular segment spans residues 333–372 (APRPNASKWITGLSITTLKDNWSSDYQRTNNAGVPDPNGS). Residues N337, N353, and N370 are each glycosylated (N-linked (GlcNAc...) asparagine). Residues 373 to 393 (IYWDFNALLGLYFPAVTGIMA) traverse the membrane as a helical segment. Over 394 to 412 (GSNRSASLKDTQRSIPIGT) the chain is Cytoplasmic. The chain crosses the membrane as a helical span at residues 413–433 (LHATISTTMMYLLSVFLFGAL). Topologically, residues 434 to 448 (STREGLLTDRLLCAA) are extracellular. The helical transmembrane segment at 449–469 (VAWPSPAVVYAGIILSTLGAA) threads the bilayer. Residues 470–505 (LQSLTGAPRLLAAIANDDILPVLNYFKAYEGSEPHV) are Cytoplasmic-facing. A helical membrane pass occupies residues 506–526 (ATLFTSFICISCVIIGNLDVI). The Extracellular portion of the chain corresponds to 527 to 529 (TPT). A helical membrane pass occupies residues 530–552 (ITMFFLLCYAGVNLSCFLLDLLD). Residues 553 to 558 (APSWRP) lie on the Cytoplasmic side of the membrane. Residues 559 to 579 (RWKLHHWSLSLIGALLCIVIM) traverse the membrane as a helical segment. Residues 580 to 585 (FMISWT) lie on the Extracellular side of the membrane. The chain crosses the membrane as a helical span at residues 586 to 606 (FTVVSLALASLIYYYVSLKGK). The Cytoplasmic segment spans residues 607-994 (AGDWGDGFKS…YRRDVVTLFT (388 aa)).

Belongs to the SLC12A transporter family.

The protein localises to the membrane. Its function is as follows. Probable cation/chloride cotransporter. This chain is Cation-chloride cotransporter 2 (CCC2), found in Oryza sativa subsp. japonica (Rice).